The chain runs to 508 residues: Photosystem II CP47 reaction center protein (508 aa).

The next 6 membrane-spanning stretches (helical) occupy residues 21-36 (SVHI…WAGS), 101-115 (IVFS…IWHW), 140-156 (GIHL…FGAF), 203-218 (IAAG…FHLS), 237-252 (VLSS…AFVV), and 457-472 (SFAL…HGAR).

It belongs to the PsbB/PsbC family. PsbB subfamily. As to quaternary structure, PSII is composed of 1 copy each of membrane proteins PsbA, PsbB, PsbC, PsbD, PsbE, PsbF, PsbH, PsbI, PsbJ, PsbK, PsbL, PsbM, PsbT, PsbX, PsbY, PsbZ, Psb30/Ycf12, at least 3 peripheral proteins of the oxygen-evolving complex and a large number of cofactors. It forms dimeric complexes. The cofactor is Binds multiple chlorophylls. PSII binds additional chlorophylls, carotenoids and specific lipids..

It localises to the plastid. Its subcellular location is the chloroplast thylakoid membrane. One of the components of the core complex of photosystem II (PSII). It binds chlorophyll and helps catalyze the primary light-induced photochemical processes of PSII. PSII is a light-driven water:plastoquinone oxidoreductase, using light energy to abstract electrons from H(2)O, generating O(2) and a proton gradient subsequently used for ATP formation. The chain is Photosystem II CP47 reaction center protein from Nymphaea alba (White water-lily).